Here is a 212-residue protein sequence, read N- to C-terminus: Pyridoxine/pyridoxamine 5'-phosphate oxidase (212 aa).

Residues Arg-7–Tyr-10 and Lys-65 contribute to the substrate site. FMN-binding positions include Arg-60–Lys-65, Phe-75–Thr-76, Lys-82, and Gln-104. Substrate contacts are provided by Tyr-122, Arg-126, and Ser-130. Residues Gln-139–Ser-140 and Trp-184 contribute to the FMN site. Arg-190–His-192 is a binding site for substrate. Arg-194 contacts FMN.

This sequence belongs to the pyridoxamine 5'-phosphate oxidase family. In terms of assembly, homodimer. It depends on FMN as a cofactor.

It carries out the reaction pyridoxamine 5'-phosphate + O2 + H2O = pyridoxal 5'-phosphate + H2O2 + NH4(+). The enzyme catalyses pyridoxine 5'-phosphate + O2 = pyridoxal 5'-phosphate + H2O2. It functions in the pathway cofactor metabolism; pyridoxal 5'-phosphate salvage; pyridoxal 5'-phosphate from pyridoxamine 5'-phosphate: step 1/1. It participates in cofactor metabolism; pyridoxal 5'-phosphate salvage; pyridoxal 5'-phosphate from pyridoxine 5'-phosphate: step 1/1. Catalyzes the oxidation of either pyridoxine 5'-phosphate (PNP) or pyridoxamine 5'-phosphate (PMP) into pyridoxal 5'-phosphate (PLP). This chain is Pyridoxine/pyridoxamine 5'-phosphate oxidase, found in Aliarcobacter butzleri (strain RM4018) (Arcobacter butzleri).